Reading from the N-terminus, the 477-residue chain is Proline--tRNA ligase (477 aa).

3 residues coordinate L-proline: Thr111, Glu113, and Arg142. 4 residues coordinate ATP: Arg142, Thr153, Gln225, and Thr228. Position 230 (His230) interacts with L-proline. Residues Ser262 and Arg264 each contribute to the ATP site. An interaction with tRNA region spans residues 340-369 (ELKGVPFRVELGPKDLEGGQAVLASRLGGK). Positions 427, 432, 458, and 461 each coordinate Zn(2+).

It belongs to the class-II aminoacyl-tRNA synthetase family. ProS type 3 subfamily. Homodimer. Only one tRNA molecule binds per dimer.

Its subcellular location is the cytoplasm. The enzyme catalyses tRNA(Pro) + L-proline + ATP = L-prolyl-tRNA(Pro) + AMP + diphosphate. Functionally, catalyzes the attachment of proline to tRNA(Pro) in a two-step reaction: proline is first activated by ATP to form Pro-AMP and then transferred to the acceptor end of tRNA(Pro). Can inadvertently accommodate and process cysteine. This Thermus thermophilus (strain ATCC 27634 / DSM 579 / HB8) protein is Proline--tRNA ligase (proS).